Reading from the N-terminus, the 150-residue chain is UPF0756 membrane protein CGSHiEE_06715 (150 aa).

Transmembrane regions (helical) follow at residues 1-21 (MTLQ…LGVL), 52-72 (YGVK…LVSG), 81-101 (GFVS…AWLA), and 123-143 (IIGV…AGIL).

This sequence belongs to the UPF0756 family.

The protein resides in the cell membrane. This is UPF0756 membrane protein CGSHiEE_06715 from Haemophilus influenzae (strain PittEE).